We begin with the raw amino-acid sequence, 259 residues long: Protein SODIUM POTASSIUM ROOT DEFECTIVE 2 (259 aa).

Positions 141 to 165 are disordered; sequence PDSITGSVDQDPAKTVEAEAPAGED. The segment covering 151–165 has biased composition (basic and acidic residues); the sequence is DPAKTVEAEAPAGED. In terms of domain architecture, HMA spans 180-246; it reads QQVVVLKVSL…KVKNAQFWTN (67 aa). A metal cation contacts are provided by cysteine 191 and cysteine 194.

This chain is Protein SODIUM POTASSIUM ROOT DEFECTIVE 2, found in Arabidopsis thaliana (Mouse-ear cress).